The chain runs to 85 residues: Homeobox protein knotted-1-like 5 (85 aa).

An ELK domain is found at 1–21 (ELKEMLLKKYSGCLSRLRSEF). Residues 22–85 (LKKRKKGKLP…NQRKRHWKPS (64 aa)) constitute a DNA-binding region (homeobox; TALE-type).

The protein belongs to the TALE/KNOX homeobox family. In terms of tissue distribution, strongly expressed in ear inflorescence primordia and shoot meristem. Weakly expressed in embryos. Absent from leaves.

The protein localises to the nucleus. Functionally, probably binds to the DNA sequence 5'-TGAC-3'. In Zea mays (Maize), this protein is Homeobox protein knotted-1-like 5 (KNOX5).